The chain runs to 207 residues: Peptidyl-tRNA hydrolase (207 aa).

Y30 is a binding site for tRNA. The active-site Proton acceptor is H35. 3 residues coordinate tRNA: Y81, N83, and N129.

Belongs to the PTH family. As to quaternary structure, monomer.

It is found in the cytoplasm. It catalyses the reaction an N-acyl-L-alpha-aminoacyl-tRNA + H2O = an N-acyl-L-amino acid + a tRNA + H(+). Hydrolyzes ribosome-free peptidyl-tRNAs (with 1 or more amino acids incorporated), which drop off the ribosome during protein synthesis, or as a result of ribosome stalling. Its function is as follows. Catalyzes the release of premature peptidyl moieties from peptidyl-tRNA molecules trapped in stalled 50S ribosomal subunits, and thus maintains levels of free tRNAs and 50S ribosomes. This is Peptidyl-tRNA hydrolase from Bordetella avium (strain 197N).